Here is a 196-residue protein sequence, read N- to C-terminus: MNSKDYESTEFYSYKFKNFSTMIIIPMALLVFILIIGSFFAIRQSTVTSTGIVEPQSTLDIANKNYHEGQIIKRNRSKWMVHLDDKKENIVHLLPIIKAKKSVNIVTYFPGNKIGAIKKGQPLHFQLSNANGTTDRLVGEVKEVGIYPVNLHGNNVYEVICKAKLDKDVKYGMEGNAPIITGKSTYFEYFKDKILN.

Residues 22-42 (MIIIPMALLVFILIIGSFFAI) form a helical membrane-spanning segment.

It localises to the cell membrane. This is an uncharacterized protein from Lactobacillus acidophilus (strain ATCC 700396 / NCK56 / N2 / NCFM).